The primary structure comprises 249 residues: Phosphoadenosine 5'-phosphosulfate reductase (249 aa).

The Nucleophile; cysteine thiosulfonate intermediate role is filled by Cys230.

It belongs to the PAPS reductase family. CysH subfamily.

The protein localises to the cytoplasm. It catalyses the reaction [thioredoxin]-disulfide + sulfite + adenosine 3',5'-bisphosphate + 2 H(+) = [thioredoxin]-dithiol + 3'-phosphoadenylyl sulfate. Its pathway is sulfur metabolism; hydrogen sulfide biosynthesis; sulfite from sulfate: step 3/3. Functionally, catalyzes the formation of sulfite from phosphoadenosine 5'-phosphosulfate (PAPS) using thioredoxin as an electron donor. In Synechocystis sp. (strain ATCC 27184 / PCC 6803 / Kazusa), this protein is Phosphoadenosine 5'-phosphosulfate reductase.